The primary structure comprises 644 residues: Exoribonuclease 2 (644 aa).

In terms of domain architecture, RNB spans 189–516 (REDLTALNFV…NHRLLKAIIT (328 aa)). The S1 motif domain maps to 561–643 (DTRFPAEIID…ETRNVVARPV (83 aa)).

This sequence belongs to the RNR ribonuclease family. RNase II subfamily.

It localises to the cytoplasm. It catalyses the reaction Exonucleolytic cleavage in the 3'- to 5'-direction to yield nucleoside 5'-phosphates.. In terms of biological role, involved in mRNA degradation. Hydrolyzes single-stranded polyribonucleotides processively in the 3' to 5' direction. This is Exoribonuclease 2 from Yersinia enterocolitica serotype O:8 / biotype 1B (strain NCTC 13174 / 8081).